The chain runs to 861 residues: Translation initiation factor IF-2 (861 aa).

2 disordered regions span residues 1–69 and 92–273; these read MSDA…GESA and ARAR…GREK. Residues 53–65 are compositionally biased toward gly residues; it reads GGPGGKQGGGAKG. Residues 94–108 show a composition bias toward basic and acidic residues; that stretch reads ARAEAADREAQKKQD. Residues 109–120 are compositionally biased toward low complexity; sequence AAAMAQRAASEQ. Basic and acidic residues-rich tracts occupy residues 121–155 and 163–186; these read RQLE…KAEA and DSGR…KRTP. The segment covering 213–223 has biased composition (low complexity); the sequence is PGPAAKQQPAR. The span at 255–273 shows a compositional bias: basic and acidic residues; that stretch reads RAREREKQRRQDTSGGREK. The tr-type G domain occupies 357 to 527; it reads PRAPVIAVMG…ALQAELLDLK (171 aa). The tract at residues 366 to 373 is G1; it reads GHVDHGKT. GTP is bound at residue 366–373; sequence GHVDHGKT. The tract at residues 391–395 is G2; sequence GITQH. The interval 413–416 is G3; the sequence is DTPG. Residues 413-417 and 467-470 contribute to the GTP site; these read DTPGH and NKCD. The G4 stretch occupies residues 467–470; that stretch reads NKCD. Positions 503–505 are G5; it reads SAK.

This sequence belongs to the TRAFAC class translation factor GTPase superfamily. Classic translation factor GTPase family. IF-2 subfamily.

It localises to the cytoplasm. In terms of biological role, one of the essential components for the initiation of protein synthesis. Protects formylmethionyl-tRNA from spontaneous hydrolysis and promotes its binding to the 30S ribosomal subunits. Also involved in the hydrolysis of GTP during the formation of the 70S ribosomal complex. This is Translation initiation factor IF-2 from Maricaulis maris (strain MCS10) (Caulobacter maris).